We begin with the raw amino-acid sequence, 1930 residues long: Transport and Golgi organization protein 1 homolog (1930 aa).

Residues 1-24 form the signal peptide; that stretch reads MAAAPGLLFWLFVLGALWWVPGQS. The Lumenal portion of the chain corresponds to 25–1171; it reads DLSHGRRFSD…EPAAVPPLES (1147 aa). The region spanning 45 to 107 is the SH3 domain; it reads MLMYRGKALE…PKDLIKVLHK (63 aa). Disordered stretches follow at residues 144–263, 317–496, 547–737, 754–891, and 1018–1149; these read LELE…REKT, EEEE…AAEK, LGSS…MNSQ, TKQP…TPEI, and TAPL…PVGA. Basic and acidic residues predominate over residues 152–189; that stretch reads EESKKAEEVSQHREKSPEESRGRELDPVPEPEAFRADS. A compositionally biased stretch (polar residues) spans 197–211; sequence SESTEGLQGQPSAQE. Phosphoserine is present on Ser229. Over residues 247-256 the composition is skewed to polar residues; it reads ESRTGNSSPA. The segment covering 317–330 has biased composition (acidic residues); sequence EEEEEVEEDADSSD. Residues 338 to 368 show a composition bias toward basic and acidic residues; the sequence is SDKDEKVPGKPMIEKYLTDKDPNLSEEDKVE. Asn360 carries N-linked (GlcNAc...) asparagine glycosylation. Positions 420 to 430 are enriched in acidic residues; sequence DSEDEGDDLFV. 2 stretches are compositionally biased toward basic and acidic residues: residues 431–442 and 451–461; these read EEPKTNDVKDSE and GEEKDIQESRK. N-linked (GlcNAc...) asparagine glycosylation is present at Asn631. A compositionally biased stretch (basic and acidic residues) spans 661-677; it reads EDGTDAEQARAIRRPQE. The span at 692–701 shows a compositional bias: acidic residues; the sequence is DEEEEEEEGD. Over residues 715 to 726 the composition is skewed to polar residues; sequence VSAQQSRENSPS. A compositionally biased stretch (basic and acidic residues) spans 791–800; that stretch reads EESHLADMRA. At Ser856 the chain carries Phosphoserine. Residues 1030–1039 are compositionally biased toward basic and acidic residues; the sequence is GWARPGEERQ. 2 stretches are compositionally biased toward polar residues: residues 1040–1054 and 1115–1127; these read PPQQ…TGDL and QPVT…SEVS. Basic and acidic residues predominate over residues 1128–1137; that stretch reads QKPDTKKDID. An intramembrane segment occupies 1172 to 1192; that stretch reads AFGSLYAFILYLSKMLLATLP. Over 1193 to 1202 the chain is Lumenal; sequence DNVQPGPDFY. The helical transmembrane segment at 1203-1223 threads the bilayer; sequence GLPWQPVIITAVLGIVSFAIF. Residues 1224–1930 lie on the Cytoplasmic side of the membrane; that stretch reads SWRTILVVKS…DRSQASKPTP (707 aa). Coiled-coil stretches lie at residues 1236–1329 and 1359–1422; these read YQVT…KNQD and LNEA…EIAL. The interval 1238–1677 is mediates interaction with MIA2; that stretch reads VTEKQISEKL…VIVKPMPGRP (440 aa). The segment at 1447–1472 is disordered; sequence ESEDPDKGGNESDDLANGETGGDRSE. Ser1458 carries the phosphoserine modification. Positions 1514–1662 form a coiled coil; it reads NLEDQIKKLE…LLEMTQKMAM (149 aa). Disordered stretches follow at residues 1669–1796, 1801–1820, and 1840–1930; these read IVKP…VPLM, PPPI…FGPR, and APGV…KPTP. The segment covering 1677-1694 has biased composition (polar residues); it reads PNTQNPPRRGLLSQNGSF. Phosphoserine occurs at positions 1693 and 1705. Positions 1706–1715 are enriched in pro residues; sequence PPLPAEPPGR. Basic and acidic residues predominate over residues 1722 to 1738; sequence SRRDTPRSEFGSLDRHL. Phosphoserine occurs at positions 1733, 1754, 1766, and 1770. Residues 1760–1773 are compositionally biased toward low complexity; that stretch reads PVVNSSSRSSSPAK. The tract at residues 1776–1930 is proline-rich domain (PRD); mediates interaction with the COPII coat subunits SEC23A and SEC23B; sequence DEGKVNMAPK…DRSQASKPTP (155 aa). Residues 1801-1811 are compositionally biased toward pro residues; it reads PPPIRYGPPPQ. Arg1805 is subject to Asymmetric dimethylarginine. The segment at 1809 to 1869 is SEC16A-interacting region (SIR); required for its localization to endoplasmic reticulum exit sites and for its interaction with SEC16A; that stretch reads PPQLCGGPFG…GHTPFRPPGS (61 aa). Residues 1846–1858 are compositionally biased toward basic and acidic residues; sequence GKRDLPLDPREFL. Residues 1881-1898 show a composition bias toward pro residues; the sequence is RLPPPTHGPQEYPPPPPA. Ser1915 is modified (phosphoserine). Polar residues predominate over residues 1915-1930; sequence SPSSVQDRSQASKPTP.

Belongs to the MIA/OTOR family. Tango1 subfamily. Interacts with MIA2. Interacts (via SH3 domain) with COL7A1. Interacts with the COPII coat subunits SEC23A, SEC23B and maybe SEC24C. May interact with APOB and MIA2. Interacts with SEC16A.

It is found in the endoplasmic reticulum membrane. Plays a role in the transport of cargos that are too large to fit into COPII-coated vesicles and require specific mechanisms to be incorporated into membrane-bound carriers and exported from the endoplasmic reticulum. This protein is required for collagen VII (COL7A1) secretion by loading COL7A1 into transport carriers. It may participate in cargo loading of COL7A1 at endoplasmic reticulum exit sites by binding to COPII coat subunits Sec23/24 and guiding SH3-bound COL7A1 into a growing carrier. Does not play a role in global protein secretion and is apparently specific to COL7A1 cargo loading. However, it may participate in secretion of other proteins in cells that do not secrete COL7A1. It is also specifically required for the secretion of lipoproteins by participating in their export from the endoplasmic reticulum. Required for correct assembly of COPII coat components at endoplasmic reticulum exit sites (ERES) and for the localization of SEC16A and membrane-bound ER-resident complexes consisting of MIA2 and PREB/SEC12 to ERES. In Mus musculus (Mouse), this protein is Transport and Golgi organization protein 1 homolog.